The following is a 538-amino-acid chain: Chaperonin GroEL (538 aa).

Residues 29 to 32 (TIGP), 86 to 90 (DGTTT), Gly413, 476 to 478 (NAA), and Asp492 contribute to the ATP site.

It belongs to the chaperonin (HSP60) family. In terms of assembly, forms a cylinder of 14 subunits composed of two heptameric rings stacked back-to-back. Interacts with the co-chaperonin GroES.

It localises to the cytoplasm. It catalyses the reaction ATP + H2O + a folded polypeptide = ADP + phosphate + an unfolded polypeptide.. In terms of biological role, together with its co-chaperonin GroES, plays an essential role in assisting protein folding. The GroEL-GroES system forms a nano-cage that allows encapsulation of the non-native substrate proteins and provides a physical environment optimized to promote and accelerate protein folding. The polypeptide is Chaperonin GroEL (Staphylococcus aureus (strain NCTC 8325 / PS 47)).